The following is an 815-amino-acid chain: Bifunctional aspartokinase/homoserine dehydrogenase (815 aa).

The segment at 1–249 (MRVLKFGGTS…VPDARLLPTL (249 aa)) is aspartokinase. The interval 250–470 (SYREAMELSY…NNKKVVDMFL (221 aa)) is interface. 2 consecutive ACT domains span residues 320-392 (VSGP…PIEV) and 401-478 (VVGD…GVGG). Residues 471-815 (VGVGGVGGEL…FADILRTLQH (345 aa)) are homoserine dehydrogenase. The NAD(+) site is built by Val473, Gly475, Val476, Ala504, and Thr555. Val476 serves as a coordination point for NADP(+). NADPH is bound at residue Val476. Thr555 is a binding site for NADP(+). NADPH-binding residues include Thr555, Ser556, and Lys579. An NADP(+)-binding site is contributed by Lys579. Glu606, Val609, Ala611, and Leu613 together coordinate Na(+). NADP(+) is bound by residues Gly664 and Glu667. L-homoserine-binding residues include Glu667 and Asp678. Lys682 acts as the Proton donor in catalysis. Gly797 is a binding site for NAD(+). Gly797 contacts NADP(+). NADPH is bound at residue Gly797.

It in the N-terminal section; belongs to the aspartokinase family. The protein in the C-terminal section; belongs to the homoserine dehydrogenase family. As to quaternary structure, homotetramer. The cofactor is a metal cation.

The enzyme catalyses L-homoserine + NADP(+) = L-aspartate 4-semialdehyde + NADPH + H(+). It catalyses the reaction L-homoserine + NAD(+) = L-aspartate 4-semialdehyde + NADH + H(+). The catalysed reaction is L-aspartate + ATP = 4-phospho-L-aspartate + ADP. Its pathway is amino-acid biosynthesis; L-lysine biosynthesis via DAP pathway; (S)-tetrahydrodipicolinate from L-aspartate: step 1/4. It functions in the pathway amino-acid biosynthesis; L-methionine biosynthesis via de novo pathway; L-homoserine from L-aspartate: step 1/3. The protein operates within amino-acid biosynthesis; L-methionine biosynthesis via de novo pathway; L-homoserine from L-aspartate: step 3/3. It participates in amino-acid biosynthesis; L-threonine biosynthesis; L-threonine from L-aspartate: step 1/5. Its pathway is amino-acid biosynthesis; L-threonine biosynthesis; L-threonine from L-aspartate: step 3/5. In terms of biological role, bifunctional aspartate kinase and homoserine dehydrogenase that catalyzes the first and the third steps toward the synthesis of lysine, methionine and threonine from aspartate. The polypeptide is Bifunctional aspartokinase/homoserine dehydrogenase (thrA) (Haemophilus influenzae (strain ATCC 51907 / DSM 11121 / KW20 / Rd)).